Reading from the N-terminus, the 190-residue chain is GTP cyclohydrolase 1 (190 aa).

Zn(2+) contacts are provided by Cys-80, His-83, and Cys-151.

This sequence belongs to the GTP cyclohydrolase I family. As to quaternary structure, toroid-shaped homodecamer, composed of two pentamers of five dimers.

The enzyme catalyses GTP + H2O = 7,8-dihydroneopterin 3'-triphosphate + formate + H(+). Its pathway is cofactor biosynthesis; 7,8-dihydroneopterin triphosphate biosynthesis; 7,8-dihydroneopterin triphosphate from GTP: step 1/1. This chain is GTP cyclohydrolase 1, found in Rickettsia akari (strain Hartford).